The following is a 313-amino-acid chain: D-beta-D-heptose 7-phosphate kinase (313 aa).

196–199 (NRAE) is an ATP binding site. Aspartate 264 is a catalytic residue.

The catalysed reaction is D-glycero-beta-D-manno-heptose 7-phosphate + ATP = D-glycero-beta-D-manno-heptose 1,7-bisphosphate + ADP + H(+). It participates in nucleotide-sugar biosynthesis; ADP-L-glycero-beta-D-manno-heptose biosynthesis; ADP-L-glycero-beta-D-manno-heptose from D-glycero-beta-D-manno-heptose 7-phosphate: step 1/4. Its pathway is bacterial outer membrane biogenesis; LPS core biosynthesis. In terms of biological role, catalyzes the phosphorylation of D-glycero-D-manno-heptose 7-phosphate at the C-1 position to selectively form D-glycero-beta-D-manno-heptose-1,7-bisphosphate. This Bordetella bronchiseptica (strain ATCC BAA-588 / NCTC 13252 / RB50) (Alcaligenes bronchisepticus) protein is D-beta-D-heptose 7-phosphate kinase (rfaE).